A 436-amino-acid polypeptide reads, in one-letter code: Serine hydroxymethyltransferase (436 aa).

(6S)-5,6,7,8-tetrahydrofolate contacts are provided by residues Leu-120 and 124–126 (GHL). Lys-229 carries the N6-(pyridoxal phosphate)lysine modification.

This sequence belongs to the SHMT family. As to quaternary structure, homodimer. The cofactor is pyridoxal 5'-phosphate.

It localises to the cytoplasm. The enzyme catalyses (6R)-5,10-methylene-5,6,7,8-tetrahydrofolate + glycine + H2O = (6S)-5,6,7,8-tetrahydrofolate + L-serine. The protein operates within one-carbon metabolism; tetrahydrofolate interconversion. Its pathway is amino-acid biosynthesis; glycine biosynthesis; glycine from L-serine: step 1/1. Catalyzes the reversible interconversion of serine and glycine with tetrahydrofolate (THF) serving as the one-carbon carrier. This reaction serves as the major source of one-carbon groups required for the biosynthesis of purines, thymidylate, methionine, and other important biomolecules. Also exhibits THF-independent aldolase activity toward beta-hydroxyamino acids, producing glycine and aldehydes, via a retro-aldol mechanism. The protein is Serine hydroxymethyltransferase of Roseiflexus castenholzii (strain DSM 13941 / HLO8).